The sequence spans 205 residues: Small ribosomal subunit protein uS4 (205 aa).

The segment covering 1 to 16 (MSKRESSKYKIDRRMG) has biased composition (basic and acidic residues). The interval 1–46 (MSKRESSKYKIDRRMGENIWGRPKSPVNRREYGPGQHGQRRKSKLS) is disordered. The 64-residue stretch at 94-157 (SRLDAIVYRA…KQLVSVLESV (64 aa)) folds into the S4 RNA-binding domain.

Belongs to the universal ribosomal protein uS4 family. Part of the 30S ribosomal subunit. Contacts protein S5. The interaction surface between S4 and S5 is involved in control of translational fidelity.

One of the primary rRNA binding proteins, it binds directly to 16S rRNA where it nucleates assembly of the body of the 30S subunit. Its function is as follows. With S5 and S12 plays an important role in translational accuracy. This Sinorhizobium fredii (strain NBRC 101917 / NGR234) protein is Small ribosomal subunit protein uS4.